The chain runs to 391 residues: Ferrochelatase (391 aa).

Fe cation-binding residues include histidine 196 and glutamate 281.

The protein belongs to the ferrochelatase family.

Its subcellular location is the cytoplasm. The enzyme catalyses heme b + 2 H(+) = protoporphyrin IX + Fe(2+). Its pathway is porphyrin-containing compound metabolism; protoheme biosynthesis; protoheme from protoporphyrin-IX: step 1/1. Its function is as follows. Catalyzes the ferrous insertion into protoporphyrin IX. This chain is Ferrochelatase, found in Prochlorococcus marinus (strain MIT 9515).